The primary structure comprises 723 residues: Epidermal growth factor receptor kinase substrate 8-like protein 1 (723 aa).

Residues 35–164 (QYPVNHLVTF…LHNYRSGRGE (130 aa)) form the PTB domain. The span at 162–183 (RGERRAAALRATQEELQRDRSP) shows a compositional bias: basic and acidic residues. Disordered stretches follow at residues 162-247 (RGER…PRGP), 442-477 (KQLQ…LESE), 537-589 (GPRL…GLDP), and 609-636 (LAQG…GSDA). S182 bears the Phosphoserine mark. Residue T187 is modified to Phosphothreonine. Residues 478–537 (TAGKWVLCNYDFQARNSSELSVKQRDVLEVLDDSRKWWKVRDPAGQEGYVPYNILTPYPG) form the SH3 domain. Over residues 543–552 (SQSPARSLNS) the composition is skewed to polar residues. Residues 553-568 (TPPPPPAPAPAPPPAL) are compositionally biased toward pro residues. Residues 571–580 (PRWDRPRWDS) show a composition bias toward basic and acidic residues. A coiled-coil region spans residues 689-719 (VQRSLLEDKEKVSELEAVMEKQKKKVEGEVE).

The protein belongs to the EPS8 family. Interacts with ABI1. Part of a complex that contains SOS1, ABI1 and EPS8L2. Associates with F-actin. As to expression, detected in placenta.

It localises to the cytoplasm. Stimulates guanine exchange activity of SOS1. May play a role in membrane ruffling and remodeling of the actin cytoskeleton. The protein is Epidermal growth factor receptor kinase substrate 8-like protein 1 (EPS8L1) of Homo sapiens (Human).